Reading from the N-terminus, the 94-residue chain is Pyrimidine/purine nucleoside phosphorylase (94 aa).

The protein belongs to the nucleoside phosphorylase PpnP family.

The catalysed reaction is a purine D-ribonucleoside + phosphate = a purine nucleobase + alpha-D-ribose 1-phosphate. It carries out the reaction adenosine + phosphate = alpha-D-ribose 1-phosphate + adenine. The enzyme catalyses cytidine + phosphate = cytosine + alpha-D-ribose 1-phosphate. It catalyses the reaction guanosine + phosphate = alpha-D-ribose 1-phosphate + guanine. The catalysed reaction is inosine + phosphate = alpha-D-ribose 1-phosphate + hypoxanthine. It carries out the reaction thymidine + phosphate = 2-deoxy-alpha-D-ribose 1-phosphate + thymine. The enzyme catalyses uridine + phosphate = alpha-D-ribose 1-phosphate + uracil. It catalyses the reaction xanthosine + phosphate = alpha-D-ribose 1-phosphate + xanthine. Its function is as follows. Catalyzes the phosphorolysis of diverse nucleosides, yielding D-ribose 1-phosphate and the respective free bases. Can use uridine, adenosine, guanosine, cytidine, thymidine, inosine and xanthosine as substrates. Also catalyzes the reverse reactions. The polypeptide is Pyrimidine/purine nucleoside phosphorylase (Pseudomonas fluorescens (strain ATCC BAA-477 / NRRL B-23932 / Pf-5)).